We begin with the raw amino-acid sequence, 293 residues long: MAVAQQAWSPGADPAPSAAPVSPGWRGALRLDFARRGERTALVRRRHQGPLVVQRTFHPEGAPCHAYLLHPPGGLVGGDELDLSVEVGEGAHALMTTPGAAKFYRSSGDWSIQRQVFRLAPGATFEWLPMETILHGGSRSRLINRFELAEGARLIAWEMVALGRPGSGDHFPRGVLDQRLAVNCEQMPLLRERLSLNADDPLRTAPWGLQGQAVFATLLASPAPDGLEHDLRDALQVPPGVRMGATRCPEGLLAVRVLGPGVEPVRKTLEQAWRTIREPVVGLPPCPPRIWST.

The disordered stretch occupies residues M1–S22. Over residues A7 to S22 the composition is skewed to low complexity.

It belongs to the UreD family. In terms of assembly, ureD, UreF and UreG form a complex that acts as a GTP-hydrolysis-dependent molecular chaperone, activating the urease apoprotein by helping to assemble the nickel containing metallocenter of UreC. The UreE protein probably delivers the nickel.

It is found in the cytoplasm. In terms of biological role, required for maturation of urease via the functional incorporation of the urease nickel metallocenter. This chain is Urease accessory protein UreD, found in Alkalilimnicola ehrlichii (strain ATCC BAA-1101 / DSM 17681 / MLHE-1).